Here is a 327-residue protein sequence, read N- to C-terminus: Cytochrome f (327 aa).

Residues 1–24 (MKRIYLALCALLLLLGTGSRPAAA) form the signal peptide. Heme-binding residues include Y25, C45, C48, and H49. Residues 293–313 (VKWLVAFLAAVAITQLLLVLK) traverse the membrane as a helical segment.

This sequence belongs to the cytochrome f family. In terms of assembly, the 4 large subunits of the cytochrome b6-f complex are cytochrome b6, subunit IV (17 kDa polypeptide, PetD), cytochrome f and the Rieske protein, while the 4 small subunits are PetG, PetL, PetM and PetN. The complex functions as a dimer. Heme serves as cofactor.

It is found in the cellular thylakoid membrane. Its function is as follows. Component of the cytochrome b6-f complex, which mediates electron transfer between photosystem II (PSII) and photosystem I (PSI), cyclic electron flow around PSI, and state transitions. In Synechococcus sp. (strain JA-3-3Ab) (Cyanobacteria bacterium Yellowstone A-Prime), this protein is Cytochrome f.